We begin with the raw amino-acid sequence, 359 residues long: Queuine tRNA-ribosyltransferase (359 aa).

Asp-92 (proton acceptor) is an active-site residue. Residues 92–96 (DSGGF), Asp-146, Gln-189, and Gly-216 contribute to the substrate site. The RNA binding stretch occupies residues 245–251 (GVGKPAD). Asp-264 functions as the Nucleophile in the catalytic mechanism. An RNA binding; important for wobble base 34 recognition region spans residues 269–273 (TRSGR). Zn(2+)-binding residues include Cys-302, Cys-304, Cys-307, and His-333.

The protein belongs to the queuine tRNA-ribosyltransferase family. In terms of assembly, homodimer. Within each dimer, one monomer is responsible for RNA recognition and catalysis, while the other monomer binds to the replacement base PreQ1. It depends on Zn(2+) as a cofactor.

The enzyme catalyses 7-aminomethyl-7-carbaguanine + guanosine(34) in tRNA = 7-aminomethyl-7-carbaguanosine(34) in tRNA + guanine. Its pathway is tRNA modification; tRNA-queuosine biosynthesis. Catalyzes the base-exchange of a guanine (G) residue with the queuine precursor 7-aminomethyl-7-deazaguanine (PreQ1) at position 34 (anticodon wobble position) in tRNAs with GU(N) anticodons (tRNA-Asp, -Asn, -His and -Tyr). Catalysis occurs through a double-displacement mechanism. The nucleophile active site attacks the C1' of nucleotide 34 to detach the guanine base from the RNA, forming a covalent enzyme-RNA intermediate. The proton acceptor active site deprotonates the incoming PreQ1, allowing a nucleophilic attack on the C1' of the ribose to form the product. After dissociation, two additional enzymatic reactions on the tRNA convert PreQ1 to queuine (Q), resulting in the hypermodified nucleoside queuosine (7-(((4,5-cis-dihydroxy-2-cyclopenten-1-yl)amino)methyl)-7-deazaguanosine). This is Queuine tRNA-ribosyltransferase from Rickettsia bellii (strain RML369-C).